The primary structure comprises 54 residues: Snake venom 5'-nucleotidase (54 aa).

Zn(2+)-binding residues include Asp-11 and His-13. N-linked (GlcNAc...) asparagine glycosylation occurs at Asn-46.

It belongs to the 5'-nucleotidase family. Requires Zn(2+) as cofactor. In terms of processing, venom 5'-nucleotidases (or a part thereof) may be released into the venom via exosome-like vesicles. They may be attached via a GPI anchor to the membrane of these vesicles. Soluble forms of 5'-nucleotidase might be released by cleavage of the ectodomain in the exosome-like vesicles or venom gland cells. As to expression, expressed by the venom gland.

It is found in the membrane. It carries out the reaction a ribonucleoside 5'-phosphate + H2O = a ribonucleoside + phosphate. Hydrolyzes nucleotides into nucleosides. Snake venom 5'-nucleotidases are widely distributed among venomous snake taxa, but there is a lack of information about their biological activities. They have been shown to inhibit platelet aggregation. This effect may be due to the liberation of inhibitory AMP or adenosine by its action on ADP released upon initiation of aggregation. Venom 5'-nucleotidases are also known to synergistically act in vivo with other toxins like ADPases, phospholipases, and disintegrins to exert a more pronounced anti-coagulant effect. This is Snake venom 5'-nucleotidase from Gloydius blomhoffii blomhoffii (Japanese mamushi).